The sequence spans 440 residues: Glutamyl-tRNA reductase (440 aa).

Substrate-binding positions include 40 to 43, Ser-100, 105 to 107, and Gln-111; these read TCNR and ERE. The Nucleophile role is filled by Cys-41. Residue 181–186 coordinates NADP(+); it reads GTGAYA.

The protein belongs to the glutamyl-tRNA reductase family. Homodimer.

It carries out the reaction (S)-4-amino-5-oxopentanoate + tRNA(Glu) + NADP(+) = L-glutamyl-tRNA(Glu) + NADPH + H(+). Its pathway is porphyrin-containing compound metabolism; protoporphyrin-IX biosynthesis; 5-aminolevulinate from L-glutamyl-tRNA(Glu): step 1/2. Functionally, catalyzes the NADPH-dependent reduction of glutamyl-tRNA(Glu) to glutamate 1-semialdehyde (GSA). The sequence is that of Glutamyl-tRNA reductase from Renibacterium salmoninarum (strain ATCC 33209 / DSM 20767 / JCM 11484 / NBRC 15589 / NCIMB 2235).